Consider the following 274-residue polypeptide: Glutamate--cysteine ligase regulatory subunit (274 aa).

S59 carries the phosphoserine modification. Residue K263 is modified to N6-acetyllysine.

Belongs to the aldo/keto reductase family. Glutamate--cysteine ligase light chain subfamily. In terms of assembly, heterodimer of a catalytic heavy chain and a regulatory light chain. Most abundant in kidney. Also found in liver and testis.

The protein operates within sulfur metabolism; glutathione biosynthesis; glutathione from L-cysteine and L-glutamate: step 1/2. The protein is Glutamate--cysteine ligase regulatory subunit (Gclm) of Rattus norvegicus (Rat).